A 427-amino-acid polypeptide reads, in one-letter code: Succinate--CoA ligase [ADP-forming] subunit beta, mitochondrial (427 aa).

A mitochondrion-targeting transit peptide spans 1–30 (MYSRKSLSLISKCGQLSRLNAQAALQARRH). In terms of domain architecture, ATP-grasp spans 39-284 (AQLLREYGIG…LSQEDPDEVK (246 aa)). ATP is bound by residues Lys-76 and 83–85 (GRG). The residue at position 102 (Ser-102) is a Phosphoserine. Glu-144 lines the ATP pocket. Residues Asn-236 and Asp-253 each coordinate Mg(2+). Residues Ser-263 and Ser-276 each carry the phosphoserine modification. Substrate-binding positions include Asn-304 and 361–363 (GIV).

It belongs to the succinate/malate CoA ligase beta subunit family. In terms of assembly, heterodimer of an alpha and a beta subunit. Mg(2+) is required as a cofactor.

It is found in the mitochondrion. It catalyses the reaction succinate + ATP + CoA = succinyl-CoA + ADP + phosphate. Its pathway is carbohydrate metabolism; tricarboxylic acid cycle; succinate from succinyl-CoA (ligase route): step 1/1. Succinyl-CoA synthetase functions in the citric acid cycle (TCA), coupling the hydrolysis of succinyl-CoA to the synthesis of ATP and thus represents the only step of substrate-level phosphorylation in the TCA. The beta subunit provides nucleotide specificity of the enzyme and binds the substrate succinate, while the binding sites for coenzyme A and phosphate are found in the alpha subunit. The protein is Succinate--CoA ligase [ADP-forming] subunit beta, mitochondrial of Saccharomyces cerevisiae (strain ATCC 204508 / S288c) (Baker's yeast).